The primary structure comprises 161 residues: Peptidyl-prolyl cis-trans isomerase-like 3 (161 aa).

S2 bears the N-acetylserine mark. In terms of domain architecture, PPIase cyclophilin-type spans 2–154 (SVTLHTDVGD…NDVHIKDITI (153 aa)). R61 is subject to Omega-N-methylarginine.

This sequence belongs to the cyclophilin-type PPIase family. PPIL3 subfamily. In terms of assembly, identified in the spliceosome C complex.

The enzyme catalyses [protein]-peptidylproline (omega=180) = [protein]-peptidylproline (omega=0). Functionally, PPIases accelerate the folding of proteins. It catalyzes the cis-trans isomerization of proline imidic peptide bonds in oligopeptides. May be involved in pre-mRNA splicing. In Mus musculus (Mouse), this protein is Peptidyl-prolyl cis-trans isomerase-like 3 (Ppil3).